The sequence spans 269 residues: Phosphoribosylformylglycinamidine synthase subunit PurQ (269 aa).

The Glutamine amidotransferase type-1 domain occupies 5 to 262; the sequence is VLVMSGYGIN…IESNLQIFKN (258 aa). C95 functions as the Nucleophile in the catalytic mechanism. Active-site residues include H222, E224, and E232.

As to quaternary structure, part of the FGAM synthase complex composed of 1 PurL, 1 PurQ and 2 PurS subunits.

It is found in the cytoplasm. The enzyme catalyses N(2)-formyl-N(1)-(5-phospho-beta-D-ribosyl)glycinamide + L-glutamine + ATP + H2O = 2-formamido-N(1)-(5-O-phospho-beta-D-ribosyl)acetamidine + L-glutamate + ADP + phosphate + H(+). The catalysed reaction is L-glutamine + H2O = L-glutamate + NH4(+). The protein operates within purine metabolism; IMP biosynthesis via de novo pathway; 5-amino-1-(5-phospho-D-ribosyl)imidazole from N(2)-formyl-N(1)-(5-phospho-D-ribosyl)glycinamide: step 1/2. Its function is as follows. Part of the phosphoribosylformylglycinamidine synthase complex involved in the purines biosynthetic pathway. Catalyzes the ATP-dependent conversion of formylglycinamide ribonucleotide (FGAR) and glutamine to yield formylglycinamidine ribonucleotide (FGAM) and glutamate. The FGAM synthase complex is composed of three subunits. PurQ produces an ammonia molecule by converting glutamine to glutamate. PurL transfers the ammonia molecule to FGAR to form FGAM in an ATP-dependent manner. PurS interacts with PurQ and PurL and is thought to assist in the transfer of the ammonia molecule from PurQ to PurL. The chain is Phosphoribosylformylglycinamidine synthase subunit PurQ from Methanococcus maripaludis (strain C5 / ATCC BAA-1333).